A 186-amino-acid chain; its full sequence is Adenylate kinase isoenzyme 6 homolog (186 aa).

The ATP site is built by Gly15, Gly17, Lys18, Ser19, and Thr20. Residues 48–71 form an NMPbind region; sequence NLSNIIKDERLYKEFDDELDASIY. The LID stretch occupies residues 126–136; sequence KRNYTKEKIKN. Residue Arg127 participates in ATP binding.

It belongs to the adenylate kinase family. AK6 subfamily. Monomer and homodimer. Interacts with small ribosomal subunit protein uS11. Not a structural component of 43S pre-ribosomes, but transiently interacts with them by binding to uS11.

It localises to the cytoplasm. The protein localises to the nucleus. It catalyses the reaction AMP + ATP = 2 ADP. The enzyme catalyses ATP + H2O = ADP + phosphate + H(+). In terms of biological role, broad-specificity nucleoside monophosphate (NMP) kinase that catalyzes the reversible transfer of the terminal phosphate group between nucleoside triphosphates and monophosphates. Also has ATPase activity. Involved in the late cytoplasmic maturation steps of the 40S ribosomal particles, specifically 18S rRNA maturation. While NMP activity is not required for ribosome maturation, ATPase activity is. Associates transiently with small ribosomal subunit protein uS11. ATP hydrolysis breaks the interaction with uS11. May temporarily remove uS11 from the ribosome to enable a conformational change of the ribosomal RNA that is needed for the final maturation step of the small ribosomal subunit. Its NMP activity may have a role in nuclear energy homeostasis. The polypeptide is Adenylate kinase isoenzyme 6 homolog (Plasmodium falciparum (isolate 3D7)).